Consider the following 101-residue polypeptide: MIPGEVFSAPGEIILNDGLPVTTLVVANTGDRPVQIGSHYHFAEANPLLQFDREAARGQRLDIPAGTAIRFEPGQSREVPLIPYRGARIVHGFRNETGEAL.

The protein belongs to the urease beta subunit family. Heterotrimer of UreA (gamma), UreB (beta) and UreC (alpha) subunits. Three heterotrimers associate to form the active enzyme.

It is found in the cytoplasm. It catalyses the reaction urea + 2 H2O + H(+) = hydrogencarbonate + 2 NH4(+). Its pathway is nitrogen metabolism; urea degradation; CO(2) and NH(3) from urea (urease route): step 1/1. This is Urease subunit beta from Granulibacter bethesdensis (strain ATCC BAA-1260 / CGDNIH1).